The chain runs to 396 residues: Elongation factor Tu 1 (396 aa).

Positions 10 to 206 constitute a tr-type G domain; that stretch reads KPHCNIGTIG…TVDDYIPQPD (197 aa). Residues 19–26 form a G1 region; it reads GHVDHGKT. 19–26 is a binding site for GTP; the sequence is GHVDHGKT. Threonine 26 serves as a coordination point for Mg(2+). The G2 stretch occupies residues 60 to 64; that stretch reads GITIN. A G3 region spans residues 81–84; that stretch reads DCPG. Residues 81–85 and 136–139 each bind GTP; these read DCPGH and NKVD. The G4 stretch occupies residues 136-139; it reads NKVD. Residues 174–176 form a G5 region; that stretch reads SAK.

The protein belongs to the TRAFAC class translation factor GTPase superfamily. Classic translation factor GTPase family. EF-Tu/EF-1A subfamily. Monomer.

It localises to the cytoplasm. The catalysed reaction is GTP + H2O = GDP + phosphate + H(+). In terms of biological role, GTP hydrolase that promotes the GTP-dependent binding of aminoacyl-tRNA to the A-site of ribosomes during protein biosynthesis. The chain is Elongation factor Tu 1 from Caulobacter sp. (strain K31).